A 772-amino-acid chain; its full sequence is Lon protease (772 aa).

The Lon N-terminal domain occupies 6–200 (YPTLPLKNTV…LMHRYLNHEV (195 aa)). ATP is bound at residue 352–359 (GPPGVGKT). One can recognise a Lon proteolytic domain in the interval 588–769 (QLAPGVAAGL…EEVLAEAIPD (182 aa)). Residues serine 675 and lysine 718 contribute to the active site.

It belongs to the peptidase S16 family. Homohexamer. Organized in a ring with a central cavity.

The protein resides in the cytoplasm. The enzyme catalyses Hydrolysis of proteins in presence of ATP.. ATP-dependent serine protease that mediates the selective degradation of mutant and abnormal proteins as well as certain short-lived regulatory proteins. Required for cellular homeostasis and for survival from DNA damage and developmental changes induced by stress. Degrades polypeptides processively to yield small peptide fragments that are 5 to 10 amino acids long. Binds to DNA in a double-stranded, site-specific manner. This chain is Lon protease, found in Nitrosococcus oceani (strain ATCC 19707 / BCRC 17464 / JCM 30415 / NCIMB 11848 / C-107).